The primary structure comprises 468 residues: Argininosuccinate synthase (468 aa).

ATP-binding positions include 10-18 and alanine 37; that span reads AYSGGLDTS. Tyrosine 90 and serine 95 together coordinate L-citrulline. ATP is bound at residue glycine 120. Residues threonine 122, asparagine 126, and aspartate 127 each coordinate L-aspartate. Asparagine 126 lines the L-citrulline pocket. Residues arginine 130, serine 182, serine 191, glutamate 267, and tyrosine 279 each contribute to the L-citrulline site. Over residues 445-457 the composition is skewed to low complexity; it reads PVAAKATAKPVKA. Positions 445 to 468 are disordered; it reads PVAAKATAKPVKAPVKKPIAKKKG. Residues 458 to 468 are compositionally biased toward basic residues; that stretch reads PVKKPIAKKKG.

This sequence belongs to the argininosuccinate synthase family. Type 1 subfamily. In terms of assembly, homotetramer.

The protein localises to the cytoplasm. It carries out the reaction L-citrulline + L-aspartate + ATP = 2-(N(omega)-L-arginino)succinate + AMP + diphosphate + H(+). Its pathway is amino-acid biosynthesis; L-arginine biosynthesis; L-arginine from L-ornithine and carbamoyl phosphate: step 2/3. This chain is Argininosuccinate synthase, found in Dechloromonas aromatica (strain RCB).